A 427-amino-acid polypeptide reads, in one-letter code: Glutamyl-tRNA reductase (427 aa).

Residues 49-52 (TCNR), S109, 114-116 (EGQ), and Q120 contribute to the substrate site. The active-site Nucleophile is the C50. NADP(+) is bound at residue 188–193 (GAGKMA).

Belongs to the glutamyl-tRNA reductase family. Homodimer.

The enzyme catalyses (S)-4-amino-5-oxopentanoate + tRNA(Glu) + NADP(+) = L-glutamyl-tRNA(Glu) + NADPH + H(+). It participates in porphyrin-containing compound metabolism; protoporphyrin-IX biosynthesis; 5-aminolevulinate from L-glutamyl-tRNA(Glu): step 1/2. It functions in the pathway porphyrin-containing compound metabolism; chlorophyll biosynthesis. Its activity is regulated as follows. Feedback inhibition by heme. In terms of biological role, catalyzes the NADPH-dependent reduction of glutamyl-tRNA(Glu) to glutamate 1-semialdehyde (GSA). The protein is Glutamyl-tRNA reductase of Synechocystis sp. (strain ATCC 27184 / PCC 6803 / Kazusa).